Here is a 445-residue protein sequence, read N- to C-terminus: GRAM domain-containing protein 2B (445 aa).

The residue at position 1 (M1) is an N-acetylmethionine. Positions 1–118 (MVKKRLSSSD…ERKKSSSSSQ (118 aa)) are disordered. Composition is skewed to polar residues over residues 18-44 (PSNS…SSEA) and 56-68 (KSPT…SSVE). Positions 82–93 (SKSSFDGSSLLS) are enriched in low complexity. Basic and acidic residues predominate over residues 94-112 (DKNDCKTESKTDSKTERKK). In terms of domain architecture, GRAM spans 123–190 (MHFHKLFLDV…FSVTLIKKTK (68 aa)). Positions 233–246 (TSVGNSPNPSSAEN) are enriched in polar residues. The segment at 233–252 (TSVGNSPNPSSAENSFRADR) is disordered. S238, S255, and S265 each carry phosphoserine. Residues 277 to 331 (DLEGYSSSGSQTPESENSRDFHVTESQTVLNVTKGETKPPRTDAHGSRAPDGKAK) form a disordered region. Residues 281–291 (YSSSGSQTPES) are compositionally biased toward polar residues. Positions 311 to 330 (GETKPPRTDAHGSRAPDGKA) are enriched in basic and acidic residues.

The protein is GRAM domain-containing protein 2B (Gramd2b) of Mus musculus (Mouse).